Here is a 148-residue protein sequence, read N- to C-terminus: Large ribosomal subunit protein uL15 (148 aa).

The disordered stretch occupies residues 1-51; it reads MNLSNLKPAEGSTKTRKRIGRGAGSGLGGTSTRGHKGAKSRSGYSKKVGFE. Residues 21–31 are compositionally biased toward gly residues; that stretch reads RGAGSGLGGTS.

It belongs to the universal ribosomal protein uL15 family. Part of the 50S ribosomal subunit.

In terms of biological role, binds to the 23S rRNA. This is Large ribosomal subunit protein uL15 from Bacteroides thetaiotaomicron (strain ATCC 29148 / DSM 2079 / JCM 5827 / CCUG 10774 / NCTC 10582 / VPI-5482 / E50).